The following is a 77-amino-acid chain: U8-lycotoxin-Ls1m (77 aa).

The signal sequence occupies residues 1–20 (MKLMIFTGLVLFAIVRLIEA). The propeptide occupies 21-26 (QAENEK).

It belongs to the neurotoxin 19 (CSTX) family. 08 (U8-Lctx) subfamily. Post-translationally, contains 4 disulfide bonds. As to expression, expressed by the venom gland.

The protein resides in the secreted. The sequence is that of U8-lycotoxin-Ls1m from Lycosa singoriensis (Wolf spider).